The following is a 304-amino-acid chain: Oxygen-dependent coproporphyrinogen-III oxidase (304 aa).

Residue Ser-94 coordinates substrate. The a divalent metal cation site is built by His-98 and His-108. His-108 serves as the catalytic Proton donor. 110-112 (NVR) is a binding site for substrate. His-147 and His-177 together coordinate a divalent metal cation. The important for dimerization stretch occupies residues 242–277 (YVEFNLVYDRGTLFGLQTGGRTESILMSMPPLVRWE). Residue 260-262 (GGR) participates in substrate binding.

Belongs to the aerobic coproporphyrinogen-III oxidase family. Homodimer. A divalent metal cation serves as cofactor.

It localises to the cytoplasm. It carries out the reaction coproporphyrinogen III + O2 + 2 H(+) = protoporphyrinogen IX + 2 CO2 + 2 H2O. The protein operates within porphyrin-containing compound metabolism; protoporphyrin-IX biosynthesis; protoporphyrinogen-IX from coproporphyrinogen-III (O2 route): step 1/1. Involved in the heme biosynthesis. Catalyzes the aerobic oxidative decarboxylation of propionate groups of rings A and B of coproporphyrinogen-III to yield the vinyl groups in protoporphyrinogen-IX. This is Oxygen-dependent coproporphyrinogen-III oxidase from Shewanella piezotolerans (strain WP3 / JCM 13877).